We begin with the raw amino-acid sequence, 319 residues long: Cytochrome c biogenesis protein CcsA (319 aa).

Transmembrane regions (helical) follow at residues 14–34 (AFGGLLIAMLVYWISLAFPGI), 36–56 (GLNRLATLITLLVNIALTLTL), 69–89 (SNLYESLLFLAWGLTFVHLFI), 97–117 (LIGATAIPVAMFVTAFASLAL), 142–162 (IMMLSYAILILGSLLSILFLI), 227–247 (TIGLGFPLLTIGIIAGAVWAN), 254–274 (WSWDPKETWALITWLIFAAYL), and 288–308 (AILASLGFLVVWICYLGVNFL).

This sequence belongs to the CcmF/CycK/Ccl1/NrfE/CcsA family. In terms of assembly, may interact with Ccs1.

The protein resides in the plastid. It localises to the chloroplast thylakoid membrane. Its function is as follows. Required during biogenesis of c-type cytochromes (cytochrome c6 and cytochrome f) at the step of heme attachment. This Pyropia yezoensis (Susabi-nori) protein is Cytochrome c biogenesis protein CcsA.